Here is a 160-residue protein sequence, read N- to C-terminus: Calcium and integrin-binding family member 3 (160 aa).

EF-hand domains lie at 39-74, 76-111, and 117-152; these read KDNP…MSEM, PRDL…LTRG, and EVTL…APDF. The Ca(2+) site is built by Asp-89, Asn-91, Asp-93, Tyr-95, Asp-100, Asp-130, Asp-132, Asp-134, Arg-136, and Asp-141.

In terms of assembly, monomer and homodimer. Interacts with ITGA2B (via C-terminus cytoplasmic tail region); the interaction is stabilized/increased in a calcium and magnesium-dependent manner. Interacts with TMC1. In terms of tissue distribution, expressed in heart, liver and inner ear. In the inner ear, expressed in vestibule and basilar membrane cells. Expressed in megakaryocytes and endothelial cells.

Its function is as follows. Acts as an auxiliary subunit of the sensory mechanoelectrical transduction (MET) channel in hair cells. Plays a role in regulating hair cell MET channel localization and function. The chain is Calcium and integrin-binding family member 3 (Cib3) from Mus musculus (Mouse).